A 455-amino-acid polypeptide reads, in one-letter code: Phosphoglucosamine mutase (455 aa).

Ser-102 serves as the catalytic Phosphoserine intermediate. Residues Ser-102, Asp-241, Asp-243, and Asp-245 each coordinate Mg(2+). Ser-102 carries the phosphoserine modification.

Belongs to the phosphohexose mutase family. Requires Mg(2+) as cofactor. In terms of processing, activated by phosphorylation.

The catalysed reaction is alpha-D-glucosamine 1-phosphate = D-glucosamine 6-phosphate. Functionally, catalyzes the conversion of glucosamine-6-phosphate to glucosamine-1-phosphate. The protein is Phosphoglucosamine mutase of Legionella pneumophila (strain Corby).